Reading from the N-terminus, the 345-residue chain is S-adenosylmethionine:tRNA ribosyltransferase-isomerase (345 aa).

The protein belongs to the QueA family. In terms of assembly, monomer.

It is found in the cytoplasm. It catalyses the reaction 7-aminomethyl-7-carbaguanosine(34) in tRNA + S-adenosyl-L-methionine = epoxyqueuosine(34) in tRNA + adenine + L-methionine + 2 H(+). It functions in the pathway tRNA modification; tRNA-queuosine biosynthesis. Functionally, transfers and isomerizes the ribose moiety from AdoMet to the 7-aminomethyl group of 7-deazaguanine (preQ1-tRNA) to give epoxyqueuosine (oQ-tRNA). The protein is S-adenosylmethionine:tRNA ribosyltransferase-isomerase of Shewanella sp. (strain W3-18-1).